A 287-amino-acid chain; its full sequence is Telomere repeat-binding factor 5 (287 aa).

The HTH myb-type domain maps to 1–62; that stretch reads MGNQKLKWTA…WRNLSVPPGT (62 aa). The H-T-H motif DNA-binding region spans 28–58; it reads WKNILRDPEFADQLIHRSNIDLKDKWRNLSV. The tract at residues 58 to 107 is disordered; it reads VPPGTQSLTNKARPAKVKEEGDTPAADANDAVTIPRPIPTIPPPPGRRTL. Residues 93–103 are compositionally biased toward pro residues; it reads RPIPTIPPPPG. Positions 119 to 193 constitute an H15 domain; sequence NAPRYDGVIF…SIQNFYKIPD (75 aa). Residues 233 to 259 are a coiled coil; that stretch reads AACKVVEAENKIDVAKLAAEEFEKMTK.

Belongs to the histone H1/H5 family. SMH subfamily.

The protein localises to the nucleus. It localises to the chromosome. In terms of biological role, binds preferentially double-stranded telomeric repeats. The sequence is that of Telomere repeat-binding factor 5 from Arabidopsis thaliana (Mouse-ear cress).